The chain runs to 212 residues: Lysozyme g-like protein 2 (212 aa).

A signal peptide spans 1–19 (MLSSVVFWGLIALIGTSRG). Cystine bridges form between Cys-39–Cys-92 and Cys-53–Cys-61. Residue Glu-105 is part of the active site.

Belongs to the glycosyl hydrolase 23 family. Strong expression detected in the eye and weak expression in the testis. No expression is observed in any other tissues.

The protein localises to the secreted. In terms of biological role, may act as a potent antibacterial protein that may play a role in the innate immunity. In Homo sapiens (Human), this protein is Lysozyme g-like protein 2 (LYG2).